The following is a 437-amino-acid chain: Probable inactive DNA (cytosine-5)-methyltransferase DRM1B (437 aa).

UBA domains lie at 20 to 60 and 120 to 164; these read SAPS…LLQL and EMSE…IYAP. Residues 243-437 form the SAM-dependent MTase DRM-type domain; it reads VHRNLPDHAL…LIQLHTTSLC (195 aa).

The protein belongs to the class I-like SAM-binding methyltransferase superfamily. DRM-methyltransferase family.

The protein resides in the nucleus. In terms of biological role, involved in de novo DNA methylation. Involved in RNA-directed DNA methylation (RdDM). The polypeptide is Probable inactive DNA (cytosine-5)-methyltransferase DRM1B (Oryza sativa subsp. japonica (Rice)).